A 492-amino-acid polypeptide reads, in one-letter code: Heat shock factor protein 4 (492 aa).

Residues 17–121 (VPAFLGKLWA…QLLERVRRKV (105 aa)) mediate DNA binding. The tract at residues 129 to 203 (GRWRPEDLGR…GPLQTGSSGA (75 aa)) is hydrophobic repeat HR-A/B. Positions 245 to 323 (LPETTLGLSS…ECDFCVTAPP (79 aa)) are interactions with DUSP26, MAPK1 and MAPK2. Residues 250–286 (LGLSSSHRTRGPIISDIHEDSPSPDGTRLSPSSGGRR) are disordered. A Glycyl lysine isopeptide (Lys-Gly) (interchain with G-Cter in SUMO) cross-link involves residue lysine 294. Serine 299 is modified (phosphoserine). The disordered stretch occupies residues 337-378 (KGNFSPEGPRNAQQPEPRGPREVPDRGTLGLDRGARSPENLL). The interval 365–390 (LGLDRGARSPENLLPPMLLRAPPESV) is hydrophobic repeat HR-C.

It belongs to the HSF family. As to quaternary structure, homotrimer. Exhibits constitutive DNA binding and forms trimers even in the absence of stress. Interacts with ALKBH4, DUSP26, MAPK1, MAPK2, MAPK8 and MAP kinase p38. In terms of processing, phosphorylated mainly on serine residues. Phosphorylation on Ser-299 promotes sumoylation on Lys-294. Constitutively sumoylated. Sumoylation represses the transcriptional activity and is promoted by phosphorylation on Ser-299.

The protein localises to the nucleus. Functionally, heat-shock transcription factor that specifically binds heat shock promoter elements (HSE). Required for denucleation and organelle rupture and degradation that occur during eye lens terminal differentiation, when fiber cells that compose the lens degrade all membrane-bound organelles in order to provide lens with transparency to allow the passage of light. In this process, may regulate denucleation of lens fiber cells in part by activating DNASE2B transcription. May be involved in DNA repair through the transcriptional regulation of RAD51. May up-regulate p53/TP53 protein in eye lens fiber cells, possibly through protein stabilization. In the eye lens, controls the expression of alpha-crystallin B chain/CRYAB and consequently may be involved in the regulation of lysosomal acidification. In Canis lupus familiaris (Dog), this protein is Heat shock factor protein 4 (HSF4).